We begin with the raw amino-acid sequence, 384 residues long: Galactokinase (384 aa).

34 to 37 (EHTD) contributes to the substrate binding site. 123–129 (SSGLSSS) is a binding site for ATP. S129 and E161 together coordinate Mg(2+). The active-site Proton acceptor is the D173. Position 222 (Y222) interacts with substrate.

The protein belongs to the GHMP kinase family. GalK subfamily.

It is found in the cytoplasm. The enzyme catalyses alpha-D-galactose + ATP = alpha-D-galactose 1-phosphate + ADP + H(+). Its pathway is carbohydrate metabolism; galactose metabolism. Catalyzes the transfer of the gamma-phosphate of ATP to D-galactose to form alpha-D-galactose-1-phosphate (Gal-1-P). The chain is Galactokinase from Actinobacillus pleuropneumoniae serotype 5b (strain L20).